Consider the following 86-residue polypeptide: CLAVATA3/ESR (CLE)-related protein 8 (86 aa).

An N-terminal signal peptide occupies residues 1 to 24; that stretch reads MKVLKRDSMLLLITLYFLLTTSMA. The segment at 43–86 is disordered; that stretch reads DLKQNKAKPHLPNLFRTMRRVPTGPNPLHHISPPQPGSLNYARN. P64 and P67 each carry hydroxyproline. A glycan (O-linked (Ara...) hydroxyproline) is linked at P67.

Belongs to the CLV3/ESR signal peptide family. In terms of processing, the O-glycosylation (arabinosylation) of the hydroxyproline Pro-67 enhances binding affinity of the CLE8p peptide for its receptor. Mostly expressed in siliques, and, to a lower extent, in flowers. Expressed in young embryos and endosperm.

It localises to the secreted. The protein resides in the extracellular space. In terms of biological role, extracellular signal peptide that regulates cell fate. Represses root apical meristem maintenance. Positively regulates the expression of the transcription factor WOX8 and thus, regulates early embryo development. Regulates the transition of protophloem cells from proliferation to differentiation, thus impinging on postembryonic growth capacity of the root meristem; this signaling pathway requires CRN and CLV2. This Arabidopsis thaliana (Mouse-ear cress) protein is CLAVATA3/ESR (CLE)-related protein 8.